The sequence spans 160 residues: Small RNA binding protein 1 (160 aa).

In terms of domain architecture, RRM spans 8 to 86; sequence FRCFVGGLAW…RNITVNEAQQ (79 aa). A disordered region spans residues 82–160; that stretch reads NEAQQRGGGG…GGGSEGGWRN (79 aa). Gly residues predominate over residues 87-160; that stretch reads RGGGGGGGYN…GGGSEGGWRN (74 aa). The segment at 88 to 157 is glycine-rich (GR) required for cell-to-cell movement; it reads GGGGGGGYNR…GSGGGGSEGG (70 aa).

It belongs to the GR-RBP family. Binds to small phloem-mobile single-stranded RNAs (ss-sRNA, e.g. small interfering RNA (siRNA) and microRNA (miRNA)) in the phloeme exudate, including viral-derived sRNA (vsiRNA). In terms of tissue distribution, accumulates in phloem exudates.

It is found in the secreted. In terms of biological role, possibly has a role in RNA transcription or processing during stress. Binds sequence non-specifically to RNAs and DNAs. Mediates cell-to-cell trafficking of RNA interference (RNAi) signals (small RNAs (sRNA), e.g. small interfering RNA (siRNA) and microRNA (miRNA)) which regulate growth and development, as well as responses to environmental inputs, including pathogen attack; can compromise zucchini yellow mosaic virus (ZYMV) and tobacco rattle virus (TRV) infections at the early stage. This Cucumis sativus (Cucumber) protein is Small RNA binding protein 1.